The following is a 118-amino-acid chain: Small ribosomal subunit protein uS13 (118 aa).

A disordered region spans residues 92-118 (RRGLPVRGQRTKTNARTRKGPRKPIKK).

This sequence belongs to the universal ribosomal protein uS13 family. As to quaternary structure, part of the 30S ribosomal subunit. Forms a loose heterodimer with protein S19. Forms two bridges to the 50S subunit in the 70S ribosome.

In terms of biological role, located at the top of the head of the 30S subunit, it contacts several helices of the 16S rRNA. In the 70S ribosome it contacts the 23S rRNA (bridge B1a) and protein L5 of the 50S subunit (bridge B1b), connecting the 2 subunits; these bridges are implicated in subunit movement. Contacts the tRNAs in the A and P-sites. The sequence is that of Small ribosomal subunit protein uS13 from Pectobacterium carotovorum subsp. carotovorum (strain PC1).